We begin with the raw amino-acid sequence, 348 residues long: Rhodopsin (348 aa).

N-acetylmethionine is present on Met1. At Met1–Gln36 the chain is on the extracellular side. N-linked (GlcNAc...) asparagine glycosylation is found at Asn2 and Asn15. Residues Phe37–Val61 traverse the membrane as a helical segment. The Cytoplasmic segment spans residues Thr62–Asn73. Residues Tyr74 to Tyr96 form a helical membrane-spanning segment. The Extracellular portion of the chain corresponds to Thr97–Cys110. A disulfide bridge links Cys110 with Cys187. Residues Asn111–Ile133 form a helical membrane-spanning segment. Positions Glu134–Tyr136 match the 'Ionic lock' involved in activated form stabilization motif. Residues Glu134–His152 lie on the Cytoplasmic side of the membrane. A helical membrane pass occupies residues Ala153–Ala173. Topologically, residues Gly174 to Ser202 are extracellular. Glu201 lines the Zn(2+) pocket. A helical membrane pass occupies residues Phe203–Gly224. Topologically, residues Gln225 to Arg252 are cytoplasmic. A helical transmembrane segment spans residues Met253–Tyr274. The Extracellular portion of the chain corresponds to Ile275–Gly284. Gln279 contributes to the Zn(2+) binding site. Residues Pro285–Met309 traverse the membrane as a helical segment. An N6-(retinylidene)lysine modification is found at Lys296. Residues Asn310–Ala348 lie on the Cytoplasmic side of the membrane. Residues Cys322 and Cys323 are each lipidated (S-palmitoyl cysteine). The interaction with SAG stretch occupies residues Asp330–Ala348. Ser334 is modified (phosphoserine). A Phosphothreonine modification is found at Thr336. Phosphoserine is present on Ser338. Thr340 and Thr342 each carry phosphothreonine. Position 343 is a phosphoserine (Ser343).

It belongs to the G-protein coupled receptor 1 family. Opsin subfamily. In terms of assembly, homodimer. May form a complex composed of RHO, GRK1 and RCVRN in a Ca(2+)-dependent manner; RCVRN prevents the interaction between GRK1 and RHO. Interacts with GRK1. Interacts (phosphorylated form) with SAG. Interacts with GNAT1. Interacts with GNAT3. SAG and G-proteins compete for a common binding site. Interacts with PRCD; the interaction promotes PRCD stability. Forms a complex with ASAP1 and ARF4. Forms a complex with ASAP1, RAB11A, Rabin8/RAB3IP, ARF4 and RAB11FIP3; the complex regulates Golgi-to-cilia rhodopsin/RHO transport in photoreceptors. In terms of processing, phosphorylated on some or all of the serine and threonine residues present in the C-terminal region. After activation by light, phosphorylated by GRK1 (in vitro). Post-translationally, contains one covalently linked retinal chromophore. Upon light absorption, the covalently bound 11-cis-retinal is converted to all-trans-retinal. After hydrolysis of the Schiff base and release of the covalently bound all-trans-retinal, active rhodopsin is regenerated by binding of a fresh molecule of 11-cis-retinal. In terms of tissue distribution, rod shaped photoreceptor cells which mediate vision in dim light.

It is found in the membrane. The protein localises to the cell projection. The protein resides in the cilium. It localises to the photoreceptor outer segment. Functionally, photoreceptor required for image-forming vision at low light intensity. Required for photoreceptor cell viability after birth. Light-induced isomerization of the chromophore 11-cis-retinal to all-trans-retinal triggers a conformational change that activates signaling via G-proteins. Subsequent receptor phosphorylation mediates displacement of the bound G-protein alpha subunit by the arrestin SAG and terminates signaling. The chain is Rhodopsin (RHO) from Homo sapiens (Human).